We begin with the raw amino-acid sequence, 248 residues long: Myelin protein P0 (248 aa).

Positions 1-29 (MAPGAPSSSPSPILAALLFSSLVLSPTLA) are cleaved as a signal peptide. One can recognise an Ig-like V-type domain in the interval 30 to 143 (IVVYTDREVY…DIVGKTSQVT (114 aa)). At 30–153 (IVVYTDREVY…LYVFEKVPTR (124 aa)) the chain is on the extracellular side. Cysteines 50 and 127 form a disulfide. Asn122 is a glycosylation site (N-linked (GlcNAc...) (complex) asparagine). Residues 154–179 (YGVVLGAVIGGILGVVLLLLLLFYLI) traverse the membrane as a helical segment. Residues 180-248 (RYCWLRRQAA…GLGESRKDKK (69 aa)) lie on the Cytoplasmic side of the membrane. Residue Ser210 is modified to Phosphoserine; by PKC. The segment at 222–248 (MLDHSRSTKAASEKKSKGLGESRKDKK) is disordered. Residues 224–248 (DHSRSTKAASEKKSKGLGESRKDKK) are compositionally biased toward basic and acidic residues. A phosphoserine mark is found at Ser226 and Ser228. Ser233 is subject to Phosphoserine; by PKC. Ser237 is subject to Phosphoserine. Ser243 bears the Phosphoserine; by PKC mark.

It belongs to the myelin P0 protein family. In terms of assembly, homodimer and homotetramer. Post-translationally, N-glycosylated; contains sulfate-substituted glycan. In terms of tissue distribution, found only in peripheral nervous system Schwann cells.

It is found in the cell membrane. In terms of biological role, is an adhesion molecule necessary for normal myelination in the peripheral nervous system. It mediates adhesion between adjacent myelin wraps and ultimately drives myelin compaction. The protein is Myelin protein P0 (Mpz) of Rattus norvegicus (Rat).